The sequence spans 362 residues: Aminomethyltransferase (362 aa).

It belongs to the GcvT family. The glycine cleavage system is composed of four proteins: P, T, L and H.

It catalyses the reaction N(6)-[(R)-S(8)-aminomethyldihydrolipoyl]-L-lysyl-[protein] + (6S)-5,6,7,8-tetrahydrofolate = N(6)-[(R)-dihydrolipoyl]-L-lysyl-[protein] + (6R)-5,10-methylene-5,6,7,8-tetrahydrofolate + NH4(+). Its function is as follows. The glycine cleavage system catalyzes the degradation of glycine. This Listeria monocytogenes serotype 4a (strain HCC23) protein is Aminomethyltransferase.